We begin with the raw amino-acid sequence, 252 residues long: 3-dehydroquinate dehydratase (252 aa).

Residues Ser-21, 46-48 (EWR), and Arg-82 contribute to the 3-dehydroquinate site. The active-site Proton donor/acceptor is the His-143. Lys-170 (schiff-base intermediate with substrate) is an active-site residue. Arg-213, Ser-232, and Gln-236 together coordinate 3-dehydroquinate.

It belongs to the type-I 3-dehydroquinase family. Homodimer.

It catalyses the reaction 3-dehydroquinate = 3-dehydroshikimate + H2O. The protein operates within metabolic intermediate biosynthesis; chorismate biosynthesis; chorismate from D-erythrose 4-phosphate and phosphoenolpyruvate: step 3/7. Functionally, involved in the third step of the chorismate pathway, which leads to the biosynthesis of aromatic amino acids. Catalyzes the cis-dehydration of 3-dehydroquinate (DHQ) and introduces the first double bond of the aromatic ring to yield 3-dehydroshikimate. The sequence is that of 3-dehydroquinate dehydratase from Shigella dysenteriae serotype 1 (strain Sd197).